The chain runs to 112 residues: Replication initiation control protein YabA (112 aa).

Residues H85, C87, C101, and C104 each contribute to the Zn(2+) site.

The protein belongs to the YabA family. In terms of assembly, homotetramer. Interacts with both DnaA and DnaN, acting as a bridge between these two proteins. The cofactor is Zn(2+).

It is found in the cytoplasm. The protein resides in the nucleoid. Functionally, involved in control of chromosome replication initiation. Inhibits the cooperative binding of DnaA to the oriC region, thus negatively regulating initiation of chromosome replication. Inhibits the ability of DnaA-ATP to form a helix on DNA; does not disassemble preformed DnaA-DNA helices. Decreases the residence time of DnaA on the chromosome at its binding sites (oriC, replication forks and promoter-binding sites). Tethers DnaA to the replication machinery via the DNA polymerase beta sliding clamp subunit (dnaN). Associates with oriC and other DnaA targets on the chromosome in a DnaA-dependent manner. The protein is Replication initiation control protein YabA of Lacticaseibacillus casei (strain BL23) (Lactobacillus casei).